The primary structure comprises 126 residues: Histone H2B 5 (126 aa).

A compositionally biased stretch (low complexity) spans Met-1–Lys-12. The tract at residues Met-1 to Lys-35 is disordered. N6-acetyllysine occurs at positions 6 and 13. Positions Lys-13–Arg-34 are enriched in basic residues. The residue at position 15 (Ser-15) is a Phosphoserine. An N6-acetyllysine mark is found at Lys-16 and Lys-21. A glycan (O-linked (GlcNAc) serine) is linked at Ser-113. Lys-121 participates in a covalent cross-link: Glycyl lysine isopeptide (Lys-Gly) (interchain with G-Cter in ubiquitin).

It belongs to the histone H2B family. The nucleosome is a histone octamer containing two molecules each of H2A, H2B, H3 and H4 assembled in one H3-H4 heterotetramer and two H2A-H2B heterodimers. The octamer wraps approximately 147 bp of DNA. In terms of processing, monoubiquitination of Lys-121 by the BRE1 gives a specific tag for epigenetic transcriptional activation and is also prerequisite for histone H3 'Lys-4' and 'Lys-79' methylation. Phosphorylated on Ser-15 during apoptosis; which facilitates apoptotic chromatin condensation. Post-translationally, glcNAcylation at Ser-113 promotes monoubiquitination of Lys-121. It fluctuates in response to extracellular glucose, and associates with transcribed genes.

It is found in the nucleus. The protein localises to the chromosome. Its function is as follows. Core component of nucleosome. Nucleosomes wrap and compact DNA into chromatin, limiting DNA accessibility to the cellular machineries which require DNA as a template. Histones thereby play a central role in transcription regulation, DNA repair, DNA replication and chromosomal stability. DNA accessibility is regulated via a complex set of post-translational modifications of histones, also called histone code, and nucleosome remodeling. The polypeptide is Histone H2B 5 (H2B-V) (Gallus gallus (Chicken)).